Reading from the N-terminus, the 90-residue chain is Small ribosomal subunit protein bS16 (90 aa).

Belongs to the bacterial ribosomal protein bS16 family. In terms of assembly, part of the 30S ribosomal subunit.

This chain is Small ribosomal subunit protein bS16, found in Bacillus subtilis (strain 168).